The following is a 360-amino-acid chain: Phospho-N-acetylmuramoyl-pentapeptide-transferase (360 aa).

A run of 10 helical transmembrane segments spans residues 26 to 46 (AILS…IMIK), 70 to 90 (GTPT…ILLW), 94 to 114 (SNPY…VGFV), 132 to 152 (WKYF…YAYG), 168 to 188 (VMPQ…VGTS), 199 to 219 (GLAI…AWAT), 236 to 256 (ASEL…FLWF), 263 to 283 (VFMG…IAVL), 288 to 308 (LVLV…ILQV), and 338 to 358 (VIVR…ATLK).

The protein belongs to the glycosyltransferase 4 family. MraY subfamily. It depends on Mg(2+) as a cofactor.

It is found in the cell inner membrane. It carries out the reaction UDP-N-acetyl-alpha-D-muramoyl-L-alanyl-gamma-D-glutamyl-meso-2,6-diaminopimeloyl-D-alanyl-D-alanine + di-trans,octa-cis-undecaprenyl phosphate = di-trans,octa-cis-undecaprenyl diphospho-N-acetyl-alpha-D-muramoyl-L-alanyl-D-glutamyl-meso-2,6-diaminopimeloyl-D-alanyl-D-alanine + UMP. The protein operates within cell wall biogenesis; peptidoglycan biosynthesis. Catalyzes the initial step of the lipid cycle reactions in the biosynthesis of the cell wall peptidoglycan: transfers peptidoglycan precursor phospho-MurNAc-pentapeptide from UDP-MurNAc-pentapeptide onto the lipid carrier undecaprenyl phosphate, yielding undecaprenyl-pyrophosphoryl-MurNAc-pentapeptide, known as lipid I. The protein is Phospho-N-acetylmuramoyl-pentapeptide-transferase of Vibrio parahaemolyticus serotype O3:K6 (strain RIMD 2210633).